The chain runs to 510 residues: GMP synthase [glutamine-hydrolyzing] (510 aa).

The Glutamine amidotransferase type-1 domain occupies 5-195 (KILVLDFGGQ…LFKVCGVKGT (191 aa)). The active-site Nucleophile is cysteine 82. Residues histidine 169 and glutamate 171 contribute to the active site. Residues 196–385 (WNMADFINEE…LGLPDEIVWR (190 aa)) enclose the GMPS ATP-PPase domain. Residue 223–229 (SGGVDSA) coordinates ATP.

In terms of assembly, homodimer.

It catalyses the reaction XMP + L-glutamine + ATP + H2O = GMP + L-glutamate + AMP + diphosphate + 2 H(+). It functions in the pathway purine metabolism; GMP biosynthesis; GMP from XMP (L-Gln route): step 1/1. Catalyzes the synthesis of GMP from XMP. This is GMP synthase [glutamine-hydrolyzing] from Halothermothrix orenii (strain H 168 / OCM 544 / DSM 9562).